The following is a 331-amino-acid chain: 4-hydroxythreonine-4-phosphate dehydrogenase (331 aa).

Positions 137 and 138 each coordinate substrate. Residues H167, H212, and H267 each coordinate a divalent metal cation. The substrate site is built by K275, N284, and R293.

This sequence belongs to the PdxA family. As to quaternary structure, homodimer. It depends on Zn(2+) as a cofactor. The cofactor is Mg(2+). Requires Co(2+) as cofactor.

It is found in the cytoplasm. The enzyme catalyses 4-(phosphooxy)-L-threonine + NAD(+) = 3-amino-2-oxopropyl phosphate + CO2 + NADH. The protein operates within cofactor biosynthesis; pyridoxine 5'-phosphate biosynthesis; pyridoxine 5'-phosphate from D-erythrose 4-phosphate: step 4/5. Its function is as follows. Catalyzes the NAD(P)-dependent oxidation of 4-(phosphooxy)-L-threonine (HTP) into 2-amino-3-oxo-4-(phosphooxy)butyric acid which spontaneously decarboxylates to form 3-amino-2-oxopropyl phosphate (AHAP). The sequence is that of 4-hydroxythreonine-4-phosphate dehydrogenase from Yersinia enterocolitica serotype O:8 / biotype 1B (strain NCTC 13174 / 8081).